Consider the following 389-residue polypeptide: PqqA peptide cyclase (389 aa).

One can recognise a Radical SAM core domain in the interval 19–234 (VGLPLWLLAE…TNEYRARLEA (216 aa)). Residues cysteine 33, cysteine 37, and cysteine 40 each coordinate [4Fe-4S] cluster.

The protein belongs to the radical SAM superfamily. PqqE family. In terms of assembly, interacts with PqqD. The interaction is necessary for activity of PqqE. It depends on [4Fe-4S] cluster as a cofactor.

The catalysed reaction is [PQQ precursor protein] + S-adenosyl-L-methionine = E-Y cross-linked-[PQQ precursor protein] + 5'-deoxyadenosine + L-methionine + H(+). Its pathway is cofactor biosynthesis; pyrroloquinoline quinone biosynthesis. Functionally, catalyzes the cross-linking of a glutamate residue and a tyrosine residue in the PqqA protein as part of the biosynthesis of pyrroloquinoline quinone (PQQ). In Pseudomonas syringae pv. syringae (strain B728a), this protein is PqqA peptide cyclase.